Consider the following 281-residue polypeptide: 3-methyl-2-oxobutanoate hydroxymethyltransferase (281 aa).

Residues 1–20 are disordered; the sequence is MSEQTIYGANTPGGSGPRTK. 2 residues coordinate Mg(2+): D62 and D101. 3-methyl-2-oxobutanoate contacts are provided by residues 62 to 63, D101, and K131; that span reads DS. E133 is a Mg(2+) binding site. The Proton acceptor role is filled by E199.

The protein belongs to the PanB family. In terms of assembly, homodecamer; pentamer of dimers. The cofactor is Mg(2+).

It localises to the cytoplasm. The enzyme catalyses 3-methyl-2-oxobutanoate + (6R)-5,10-methylene-5,6,7,8-tetrahydrofolate + H2O = 2-dehydropantoate + (6S)-5,6,7,8-tetrahydrofolate. Its pathway is cofactor biosynthesis; (R)-pantothenate biosynthesis; (R)-pantoate from 3-methyl-2-oxobutanoate: step 1/2. Its function is as follows. Catalyzes the reversible reaction in which hydroxymethyl group from 5,10-methylenetetrahydrofolate is transferred onto alpha-ketoisovalerate to form ketopantoate. The sequence is that of 3-methyl-2-oxobutanoate hydroxymethyltransferase from Mycobacterium bovis (strain ATCC BAA-935 / AF2122/97).